The sequence spans 718 residues: Ribonuclease J (718 aa).

The disordered stretch occupies residues 1 to 130 (MNDSRNRGRK…RGNRGGGRRN (130 aa)). Composition is skewed to low complexity over residues 55 to 91 (AAQGAQGSQDSQGSQNAQGSQNRESGNNNRNRSNNNR) and 100 to 118 (SGNANEGANNNSGNQNRQG). Histidine 220, histidine 222, aspartate 224, histidine 225, histidine 287, and aspartate 309 together coordinate Zn(2+). A substrate-binding site is contributed by 510–514 (HTSGH). A Zn(2+)-binding site is contributed by histidine 536.

It belongs to the metallo-beta-lactamase superfamily. RNA-metabolizing metallo-beta-lactamase-like family. Bacterial RNase J subfamily. Homodimer, may be a subunit of the RNA degradosome. The cofactor is Zn(2+).

Its subcellular location is the cytoplasm. Its function is as follows. An RNase that has 5'-3' exonuclease and possibly endoonuclease activity. Involved in maturation of rRNA and in some organisms also mRNA maturation and/or decay. The chain is Ribonuclease J from Corynebacterium glutamicum (strain ATCC 13032 / DSM 20300 / JCM 1318 / BCRC 11384 / CCUG 27702 / LMG 3730 / NBRC 12168 / NCIMB 10025 / NRRL B-2784 / 534).